A 167-amino-acid chain; its full sequence is Small ribosomal subunit protein uS5 (167 aa).

In terms of domain architecture, S5 DRBM spans Leu12 to Ile75.

It belongs to the universal ribosomal protein uS5 family. In terms of assembly, part of the 30S ribosomal subunit. Contacts proteins S4 and S8.

With S4 and S12 plays an important role in translational accuracy. Its function is as follows. Located at the back of the 30S subunit body where it stabilizes the conformation of the head with respect to the body. In Vibrio vulnificus (strain CMCP6), this protein is Small ribosomal subunit protein uS5.